The primary structure comprises 275 residues: Thiazole synthase (275 aa).

K108 functions as the Schiff-base intermediate with DXP in the catalytic mechanism. 1-deoxy-D-xylulose 5-phosphate-binding positions include G169, 196–197, and 218–219; these read AG and NT.

It belongs to the ThiG family. As to quaternary structure, homotetramer. Forms heterodimers with either ThiH or ThiS.

The protein localises to the cytoplasm. The enzyme catalyses [ThiS sulfur-carrier protein]-C-terminal-Gly-aminoethanethioate + 2-iminoacetate + 1-deoxy-D-xylulose 5-phosphate = [ThiS sulfur-carrier protein]-C-terminal Gly-Gly + 2-[(2R,5Z)-2-carboxy-4-methylthiazol-5(2H)-ylidene]ethyl phosphate + 2 H2O + H(+). Its pathway is cofactor biosynthesis; thiamine diphosphate biosynthesis. Functionally, catalyzes the rearrangement of 1-deoxy-D-xylulose 5-phosphate (DXP) to produce the thiazole phosphate moiety of thiamine. Sulfur is provided by the thiocarboxylate moiety of the carrier protein ThiS. In vitro, sulfur can be provided by H(2)S. This is Thiazole synthase from Ralstonia nicotianae (strain ATCC BAA-1114 / GMI1000) (Ralstonia solanacearum).